Here is a 153-residue protein sequence, read N- to C-terminus: Ribosome maturation factor RimP (153 aa).

Belongs to the RimP family.

It localises to the cytoplasm. Required for maturation of 30S ribosomal subunits. The sequence is that of Ribosome maturation factor RimP from Trichormus variabilis (strain ATCC 29413 / PCC 7937) (Anabaena variabilis).